A 351-amino-acid polypeptide reads, in one-letter code: Glycerol-3-phosphate dehydrogenase [NAD(P)+] (351 aa).

NADPH is bound by residues serine 12, tryptophan 13, histidine 33, and lysine 114. The sn-glycerol 3-phosphate site is built by lysine 114, glycine 145, and serine 147. Alanine 149 serves as a coordination point for NADPH. Sn-glycerol 3-phosphate-binding residues include lysine 200, aspartate 253, serine 263, arginine 264, and asparagine 265. The active-site Proton acceptor is lysine 200. Residue arginine 264 participates in NADPH binding. NADPH contacts are provided by valine 288 and glutamate 290.

The protein belongs to the NAD-dependent glycerol-3-phosphate dehydrogenase family.

The protein resides in the cytoplasm. The catalysed reaction is sn-glycerol 3-phosphate + NAD(+) = dihydroxyacetone phosphate + NADH + H(+). It carries out the reaction sn-glycerol 3-phosphate + NADP(+) = dihydroxyacetone phosphate + NADPH + H(+). Its pathway is membrane lipid metabolism; glycerophospholipid metabolism. Its function is as follows. Catalyzes the reduction of the glycolytic intermediate dihydroxyacetone phosphate (DHAP) to sn-glycerol 3-phosphate (G3P), the key precursor for phospholipid synthesis. The polypeptide is Glycerol-3-phosphate dehydrogenase [NAD(P)+] (Lacticaseibacillus paracasei (strain ATCC 334 / BCRC 17002 / CCUG 31169 / CIP 107868 / KCTC 3260 / NRRL B-441) (Lactobacillus paracasei)).